The following is a 432-amino-acid chain: C2H2 type master regulator of conidiophore development brlA (432 aa).

Disordered stretches follow at residues 22–72 and 238–260; these read SNEC…RTPG and KQHSPTTPIRSCSLGTGSGADTP. The span at 29-44 shows a compositional bias: low complexity; that stretch reads TSSFSPLESPTPTPTS. Polar residues-rich tracts occupy residues 62-72 and 238-252; these read LPNNTYERTPG and KQHSPTTPIRSCSLG. 2 consecutive C2H2-type zinc fingers follow at residues 320–344 and 350–375; these read FKCKEPGCNGRFKRQEHLKRHMKSH and HVCWVPGCHRAFSRSDNLNAHYTKTH. Positions 388 to 432 are disordered; that stretch reads LDENSPDYDPEFRGQLTPDGRPIYGSKLDDPIPGAGDMSLDGWDE.

The protein localises to the nucleus. Its function is as follows. BrlA, abaA and wetA are pivotal regulators of conidiophore development and conidium maturation. They act individually and together to regulate their own expression and that of numerous other sporulation-specific genes. Binds promoters of target genes at brlA response elements (BREs) containing the conserved sequence 5'-(C/A)(A/G)AGGG(G/A)-3'. Controls the expression of the conidiophore-specific phenol oxidase ivoB. Controls the expression of the hydrophobin rodA. Mediates the developmental switch from the indeterminate, apical growth pattern of vegetative cells to the budding growth pattern of conidiophores. Expression of brlA leads to activation of abaA, wetA and stuA, cessation of vegetative growth, cellular vacuolization and spore formation. This is C2H2 type master regulator of conidiophore development brlA from Emericella nidulans (strain FGSC A4 / ATCC 38163 / CBS 112.46 / NRRL 194 / M139) (Aspergillus nidulans).